Consider the following 83-residue polypeptide: Small ribosomal subunit protein bS20 (83 aa).

Belongs to the bacterial ribosomal protein bS20 family.

Functionally, binds directly to 16S ribosomal RNA. The sequence is that of Small ribosomal subunit protein bS20 from Lactobacillus delbrueckii subsp. bulgaricus (strain ATCC 11842 / DSM 20081 / BCRC 10696 / JCM 1002 / NBRC 13953 / NCIMB 11778 / NCTC 12712 / WDCM 00102 / Lb 14).